The following is a 115-amino-acid chain: Beta-2-microglobulin (115 aa).

The first 18 residues, 1-18 (MGLLICSLLLGLLCCSMA), serve as a signal peptide directing secretion. Residues 23 to 114 (PKVEVYTREP…KSKDHFLMIG (92 aa)) enclose the Ig-like C1-type domain.

This sequence belongs to the beta-2-microglobulin family. Heterodimer of an alpha chain and a beta chain. Beta-2-microglobulin is the beta-chain of major histocompatibility complex class I molecules.

Its subcellular location is the secreted. Functionally, component of the class I major histocompatibility complex (MHC). Involved in the presentation of peptide antigens to the immune system. The sequence is that of Beta-2-microglobulin (b2m) from Paralichthys olivaceus (Bastard halibut).